The following is a 93-amino-acid chain: MARSIKKGPFVDTHLQAKVQAEGPSSKKVIKTWSRRSTITPDFIGLTFAVHNGRKFIPVFVTENMVGHKMGEFAPTRTFFGHAADKKSKLKKK.

The protein belongs to the universal ribosomal protein uS19 family.

Protein S19 forms a complex with S13 that binds strongly to the 16S ribosomal RNA. The protein is Small ribosomal subunit protein uS19 of Geotalea uraniireducens (strain Rf4) (Geobacter uraniireducens).